We begin with the raw amino-acid sequence, 198 residues long: Urease accessory protein UreE (198 aa).

The tract at residues 137 to 198 is disordered; the sequence is ARGAYHSPGG…RGHDHDHKHD (62 aa). Over residues 149–198 the composition is skewed to basic and acidic residues; that stretch reads HGHDHDHNHDHGHDHAHDHNHGHDHDHEHGYEHEHEHRHDRGHDHDHKHD.

This sequence belongs to the UreE family.

The protein resides in the cytoplasm. Functionally, involved in urease metallocenter assembly. Binds nickel. Probably functions as a nickel donor during metallocenter assembly. The polypeptide is Urease accessory protein UreE (Rhizobium johnstonii (strain DSM 114642 / LMG 32736 / 3841) (Rhizobium leguminosarum bv. viciae)).